The sequence spans 385 residues: Arginine biosynthesis bifunctional protein ArgJ (385 aa).

Positions 142, 168, 179, 259, 380, and 385 each coordinate substrate. Thr-179 serves as the catalytic Nucleophile.

The protein belongs to the ArgJ family. As to quaternary structure, heterotetramer of two alpha and two beta chains.

The protein localises to the cytoplasm. It catalyses the reaction N(2)-acetyl-L-ornithine + L-glutamate = N-acetyl-L-glutamate + L-ornithine. The enzyme catalyses L-glutamate + acetyl-CoA = N-acetyl-L-glutamate + CoA + H(+). It participates in amino-acid biosynthesis; L-arginine biosynthesis; L-ornithine and N-acetyl-L-glutamate from L-glutamate and N(2)-acetyl-L-ornithine (cyclic): step 1/1. It functions in the pathway amino-acid biosynthesis; L-arginine biosynthesis; N(2)-acetyl-L-ornithine from L-glutamate: step 1/4. Its function is as follows. Catalyzes two activities which are involved in the cyclic version of arginine biosynthesis: the synthesis of N-acetylglutamate from glutamate and acetyl-CoA as the acetyl donor, and of ornithine by transacetylation between N(2)-acetylornithine and glutamate. This chain is Arginine biosynthesis bifunctional protein ArgJ, found in Leptospira interrogans serogroup Icterohaemorrhagiae serovar copenhageni (strain Fiocruz L1-130).